The sequence spans 425 residues: MAVSARAGIVVTGTEVLTGRVQDRNGPWIADQLLELGVELAHITICGDRPADIEAQLRFMADQDLDLIITSGGLGPTADDMTVEVVARFCGRELILDAELEDTIANILKRLMARNPGFDPGNFDSVRAANQKQAMIPAGAQVINPVGTAPGLVVPGKPAVMVLPGPPRELQPMWHSAIQMPGAQEAIAGRTTYRQETIRMFGLPESGLAETLRSAETTIPDFGALEITTCLRRGEIEMVTRYEPGAADTYAQVARLLRDRHGDQIYSEDGSQVDDLVARLLADRRIATAESCTAGLLAARLTDRPGSSGYVMGGVVSYSNEAKAELLGVDPALIEMHGAVSEPVAQAMAAGALQRFGADTAVAITGIAGPGGGTEQKPVGTVCFCVLVGDGRNVTRTLRLPGNRSDIRERSTTVAMHLLRRALSE.

This sequence belongs to the CinA family.

The chain is CinA-like protein from Mycobacterium marinum (strain ATCC BAA-535 / M).